A 298-amino-acid chain; its full sequence is Heme A synthase (298 aa).

Residues M1–K6 are Cytoplasmic-facing. The helical transmembrane segment at I7–T27 threads the bilayer. Over K28 to R62 the chain is Extracellular. An intrachain disulfide couples C35 to C42. E58 is an active-site residue. H61 is a heme o binding site. Residues I63 to L83 form a helical membrane-spanning segment. The Cytoplasmic segment spans residues S84–M92. A helical membrane pass occupies residues A93–F113. Over G114 to H117 the chain is Extracellular. The helical transmembrane segment at A118 to T138 threads the bilayer. Residue H123 coordinates heme o. The Cytoplasmic portion of the chain corresponds to T139–Y158. Residues K159–V179 traverse the membrane as a helical segment. The Extracellular portion of the chain corresponds to K180–H209. C188 and C194 are joined by a disulfide. A helical transmembrane segment spans residues F210 to T230. A heme b-binding site is contributed by H212. The Cytoplasmic segment spans residues L231–H244. The helical transmembrane segment at I245–G265 threads the bilayer. Over N266–A271 the chain is Extracellular. Residues M272 to L292 traverse the membrane as a helical segment. H274 serves as a coordination point for heme b. Topologically, residues S293–V298 are cytoplasmic.

It belongs to the COX15/CtaA family. Type 1 subfamily. Interacts with CtaB. The cofactor is heme b.

It localises to the cell membrane. It catalyses the reaction Fe(II)-heme o + 2 A + H2O = Fe(II)-heme a + 2 AH2. It participates in porphyrin-containing compound metabolism; heme A biosynthesis; heme A from heme O: step 1/1. Catalyzes the conversion of heme O to heme A by two successive hydroxylations of the methyl group at C8. The first hydroxylation forms heme I, the second hydroxylation results in an unstable dihydroxymethyl group, which spontaneously dehydrates, resulting in the formyl group of heme A. This is Heme A synthase from Halalkalibacterium halodurans (strain ATCC BAA-125 / DSM 18197 / FERM 7344 / JCM 9153 / C-125) (Bacillus halodurans).